The chain runs to 899 residues: MSAQEDALPATPPASSSIKISDGDKPKEKRTGTRMKLLNDVAAKAAVASKGASVSPRLKPEKRTSIKILNNNNNDEAQTSTKGGDSVPRPKPPAPASRYRTRSSAPASSAVETAKIKTSPSKKKKMDHYVLQAIKSENNKAENTTSVVVVEDEDTIDFILADDEVELGAGAKENGEEFVVSGVDEDDDDDDDDEDEGVVEGGAKRRSGNNELKEMVEHVCGKCYKTFRRVKSLKKHLEFCRYDSGYHLRKADMLKNLEKIEKDAVVMEKKDISFCCSESYDTFHLGHINCPDCPKSFKTQTSYERHIFITHSWSCNDYPCSICNAKLRSGALLKLHEQQHQLRGKPFACKICGKDFMCSYHLKCHQKYSSCSANENDTMSCKVCDRVFYRLDNLCAHLKQHLGTQVVKKPEYMCHVCKNCFYSLSTLNIHIRTHTGEKPFDCDLCDKKFSALVALKKHRRYHTGEKPYTCTVCSQSFAVKEVLNRHMKRHTGERPHKCNECGKSFIQATQLRTHSKTHLRPYACSLCIQKFKTEKQLERHVKDHTRQKRASFACTECTRSFRTSALLKEHLDAGDHSPVKSTRAKRSAKMIERTDCAICDKNFDTTETLRNHIRSVHECDPDDIFGTEPPAKRKAKKTVVAAVAEEQKEQEDDVPARNTSAGSLISSKTDGNGVVVREFLVDEGDGNAQTIDLRKRGLHHLPLEGDKATESTAETDIKAESSKEKPSVSPVVKKEQRKSLAASLAAAIADNLEEPSSDDEFSGEVLTEEDLKLKENIAKLIDMLVDPQTLKKYGWPNSSEESVLCKVIENCGHDLAKGSEAYAELDYGSRMPILQLLFTVVIHNDSIKALLNNFPIDDVIEYVLGDEDQDQDQETDKGKDREADNTDTDTREDAVESEA.

Disordered regions lie at residues 1–33, 45–127, and 171–206; these read MSAQ…RTGT, AAVA…KKMD, and AKEN…AKRR. Residues 21–31 show a composition bias toward basic and acidic residues; the sequence is SDGDKPKEKRT. Residues 45-55 are compositionally biased toward low complexity; that stretch reads AAVASKGASVS. 2 stretches are compositionally biased toward polar residues: residues 67–83 and 102–111; these read KILN…STKG and RSSAPASSAV. Residues 183-198 are compositionally biased toward acidic residues; that stretch reads VDEDDDDDDDDEDEGV. Residues 218 to 240 form a C2H2-type 1; atypical zinc finger; the sequence is HVCGKCYKTFRRVKSLKKHLEFC. Residues 288–311 form a C2H2-type 2 zinc finger; that stretch reads INCPDCPKSFKTQTSYERHIFITH. The C2H2-type 3; atypical zinc finger occupies 318 to 340; it reads YPCSICNAKLRSGALLKLHEQQH. 9 consecutive C2H2-type zinc fingers follow at residues 347 to 365, 379 to 401, 412 to 434, 440 to 462, 468 to 490, 496 to 518, 522 to 544, 552 to 576, and 594 to 617; these read FACK…LKCH, MSCK…LKQH, YMCH…IRTH, FDCD…RRYH, YTCT…MKRH, HKCN…SKTH, YACS…VKDH, FACT…AGDH, and TDCA…RSVH. Disordered stretches follow at residues 646–665, 702–734, and 865–899; these read EQKE…GSLI, PLEG…VVKK, and GDED…ESEA. Over residues 874-899 the composition is skewed to basic and acidic residues; sequence ETDKGKDREADNTDTDTREDAVESEA.

It localises to the nucleus. Component of the gypsy chromatin insulator complex which is required for the function of the gypsy chromatin insulator and other endogenous chromatin insulators. Chromatin insulators are regulatory elements which establish independent domains of transcriptional activity within eukaryotic genomes. Insulators have two defining properties; they can block the communication between an enhancer and a promoter when placed between them and can also buffer transgenes from position effect variegation (PEV). Insulators are proposed to structure the chromatin fiber into independent domains of differing transcriptional potential by promoting the formation of distinct chromatin loops. This chromatin looping may involve the formation of insulator bodies, where homotypic interactions between individual subunits of the insulator complex could promote the clustering of widely spaced insulators at the nuclear periphery. Within the gypsy insulator complex, this protein binds specifically to a region of the gypsy element located 3' of the 5' long terminal repeat (LTR), and may also mediate interaction with other endogenous insulators at sites distinct from those recognized by Cp190. Cooperates with pita and cliff to recruit Cp190 and regulate insulator function at the front-ultraabdominal (Fub) boundary. The chain is Protein suppressor of hairy wing (su(Hw)) from Drosophila virilis (Fruit fly).